Here is a 432-residue protein sequence, read N- to C-terminus: Pachytene checkpoint protein 2 homolog (432 aa).

The residue at position 1 (methionine 1) is an N-acetylmethionine. 179–186 (GPPGTGKT) is a binding site for ATP.

This sequence belongs to the AAA ATPase family. PCH2 subfamily. As to quaternary structure, specifically interacts with the ligand binding domain of the thyroid receptor (TR). This interaction does not require the presence of thyroid hormone for its interaction. Interacts with proteasome subunit PSMA8; to participate in meiosis progression during spermatogenesis. As to expression, widely expressed, including in testis.

Its function is as follows. Plays a key role in chromosome recombination and chromosome structure development during meiosis. Required at early steps in meiotic recombination that leads to non-crossovers pathways. Also needed for efficient completion of homologous synapsis by influencing crossover distribution along the chromosomes affecting both crossovers and non-crossovers pathways. Also required for development of higher-order chromosome structures and is needed for synaptonemal-complex formation. In males, required for efficient synapsis of the sex chromosomes and for sex body formation. Promotes early steps of the DNA double-strand breaks (DSBs) repair process upstream of the assembly of RAD51 complexes. Required for depletion of HORMAD1 and HORMAD2 from synapsed chromosomes. Plays a role in mitotic spindle assembly checkpoint (SAC) activation. The chain is Pachytene checkpoint protein 2 homolog (Trip13) from Mus musculus (Mouse).